The primary structure comprises 1376 residues: MKEWPPNLAFHNKVIDGAAIKQLISRLIQRFGMLYTSHVLDQVKLLGFKQATASSISLGIDDLLTIPSKRWLVQDAQQQSFLLEKYYQYGNVHAVEKLRQSIEIWDAISAYLRQEMTPNFGMTDPLNPVHIMSFSGARGNASQVNQLIGMRGLMSDPLGQMIDLPIQSNLREGLSLTEYIISSYGARKGVVDTAIRTADAGYLTRRLVDVVQHIIVRGTDCGTTRGLSLSPQNGGVPESTQTLIGRVLAKDIYIGPRCIAVRNQDLGGGLVNRLITFKKKPIYVRTPFTCRSTSWICRFCYGRSPTSACGDLVELGEAVGIIAGQSIGEPGTQLTLRTFHTGGVFTGGTAEQVRAPFNGKIKFNEDLVHPTRTRHGQPAFLCYIDLYLTIESEDIIHSVPIPPKSFLLVQNDQYVESEQVIAEISAGTSTFAFKDRVRKHIYSDSSGEMHSNTGMYHARKFPFSNVHILPKTSHLWILLGDLCGSGPVLFSMYKDQDQMSIHSLSVQGRNTPSLSVNNDQLKHRRLSLYDKNGTGGGSIPILNYSEMTRSLSTARCNLLYPAILHENFSLLAKKRRTRFLIPFQSIQEHRRKNERILCSDISIKIPRNGLFRGNSILAYFDDPRYKIGVSGITKYGTIEVDSIVTKESFINYGGVQPKDEGKVDPLFFIPEEVHIFPETSSIMVRNNSIIGINTKITLNKRSRVGGLVRVKKIHRGIKLQIFSGDISFPRKRDKRFIPQNKDILIPPQIRKRNFNKSKKAKNWIYVQKMRPTNKNSFFLLQPVVTYEIADGINLARLFPPDLLQEIDNIQLRVGNYIRYGDGELIPGISGKNPRIQLVRTFLVLNWDQDKKDSSIEEAHASFVEVSTKGMVRDFLRIHLRKSQIAYAYMRKRNDPSGSGFPSDNELDHSNRNPFSSSYPKARVRQSLNGTIRTLLNRNKECQSLLILSSSNCFRLGPFNNVKYHNPKKESIKRDTDPLIPIRNFSGPLGTVPQIANFDVFYHLITKNRISVFHYLPPEKGKLQVIQSFLMDENGRIYKSDPYSNIFLNPFNFNWYFLQHNYHKNYPNYCEETSTIINLGQFLFETVCIAKNGPRLKSGQVFILQVGYVIIRSGKPYLAIPGATVHGHSGQIVYGGDTLVTFIYEKARSADITQGLPKVDAMFEVRSKNSISMRLKARDEYWNEYITRNLGIYWGLLIGAKLTIAQSSLSLVNEIQKVYRSQGVQIDNRHIELIVRQITSKVLISEDGMSNLFLPGELIGLLQAERTGRALEKGICYRAILVGITKASLNTQSFISEASFQQTARVLAKAALRGRIDWLKGLKENVVLGGMSPAGTGFRGLVHPSSKKYKTLSLETQRKILFDGKVRDLLFHHKRIV.

Zn(2+) is bound by residues C221, C290, C297, and C300. The tract at residues 895–919 (PSGSGFPSDNELDHSNRNPFSSSYP) is disordered.

This sequence belongs to the RNA polymerase beta' chain family. RpoC2 subfamily. In plastids the minimal PEP RNA polymerase catalytic core is composed of four subunits: alpha, beta, beta', and beta''. When a (nuclear-encoded) sigma factor is associated with the core the holoenzyme is formed, which can initiate transcription. It depends on Zn(2+) as a cofactor.

It is found in the plastid. The protein resides in the chloroplast. It catalyses the reaction RNA(n) + a ribonucleoside 5'-triphosphate = RNA(n+1) + diphosphate. Functionally, DNA-dependent RNA polymerase catalyzes the transcription of DNA into RNA using the four ribonucleoside triphosphates as substrates. The polypeptide is DNA-directed RNA polymerase subunit beta'' (Pelargonium hortorum (Common geranium)).